A 172-amino-acid polypeptide reads, in one-letter code: 16S rRNA aminocarboxypropyltransferase (172 aa).

4 residues coordinate S-adenosyl-L-methionine: Thr21, Leu71, Leu93, and Thr112.

It belongs to the TDD superfamily. TSR3 family.

The protein localises to the cytoplasm. The catalysed reaction is an N(1)-methylpseudouridine in rRNA + S-adenosyl-L-methionine = N(1)-methyl-N(3)-[(3S)-3-amino-3-carboxypropyl]pseudouridine in rRNA + S-methyl-5'-thioadenosine + H(+). Its function is as follows. Aminocarboxypropyltransferase that catalyzes the aminocarboxypropyl transfer on pseudouridine at position 914 in 16S rRNA. It constitutes the last step in biosynthesis of the hypermodified N1-methyl-N3-(3-amino-3-carboxypropyl) pseudouridine (m1acp3-Psi). This Methanocaldococcus jannaschii (strain ATCC 43067 / DSM 2661 / JAL-1 / JCM 10045 / NBRC 100440) (Methanococcus jannaschii) protein is 16S rRNA aminocarboxypropyltransferase.